The following is a 208-amino-acid chain: Outer-membrane lipoprotein carrier protein (208 aa).

The N-terminal stretch at 1–22 is a signal peptide; sequence MKKRLCAVLLASPLLFSAAVFA.

The protein belongs to the LolA family. As to quaternary structure, monomer.

It is found in the periplasm. Functionally, participates in the translocation of lipoproteins from the inner membrane to the outer membrane. Only forms a complex with a lipoprotein if the residue after the N-terminal Cys is not an aspartate (The Asp acts as a targeting signal to indicate that the lipoprotein should stay in the inner membrane). The chain is Outer-membrane lipoprotein carrier protein from Shewanella baltica (strain OS223).